The following is a 244-amino-acid chain: tRNA (guanine-N(1)-)-methyltransferase (244 aa).

Residues Gly112 and 132-137 (IGDYIL) contribute to the S-adenosyl-L-methionine site.

The protein belongs to the RNA methyltransferase TrmD family. Homodimer.

It localises to the cytoplasm. It catalyses the reaction guanosine(37) in tRNA + S-adenosyl-L-methionine = N(1)-methylguanosine(37) in tRNA + S-adenosyl-L-homocysteine + H(+). Specifically methylates guanosine-37 in various tRNAs. The sequence is that of tRNA (guanine-N(1)-)-methyltransferase from Geobacillus kaustophilus (strain HTA426).